A 619-amino-acid polypeptide reads, in one-letter code: Chaperone protein HscA homolog (619 aa).

It belongs to the heat shock protein 70 family.

Chaperone involved in the maturation of iron-sulfur cluster-containing proteins. Has a low intrinsic ATPase activity which is markedly stimulated by HscB. In Azotobacter vinelandii, this protein is Chaperone protein HscA homolog.